The chain runs to 342 residues: Heat-inducible transcription repressor HrcA (342 aa).

Belongs to the HrcA family.

Negative regulator of class I heat shock genes (grpE-dnaK-dnaJ and groELS operons). Prevents heat-shock induction of these operons. This Leptospira borgpetersenii serovar Hardjo-bovis (strain JB197) protein is Heat-inducible transcription repressor HrcA.